Here is a 262-residue protein sequence, read N- to C-terminus: 1-(5-phosphoribosyl)-5-[(5-phosphoribosylamino)methylideneamino] imidazole-4-carboxamide isomerase (262 aa).

The active-site Proton acceptor is the D8. D130 serves as the catalytic Proton donor.

This sequence belongs to the HisA/HisF family.

The protein resides in the cytoplasm. It catalyses the reaction 1-(5-phospho-beta-D-ribosyl)-5-[(5-phospho-beta-D-ribosylamino)methylideneamino]imidazole-4-carboxamide = 5-[(5-phospho-1-deoxy-D-ribulos-1-ylimino)methylamino]-1-(5-phospho-beta-D-ribosyl)imidazole-4-carboxamide. It functions in the pathway amino-acid biosynthesis; L-histidine biosynthesis; L-histidine from 5-phospho-alpha-D-ribose 1-diphosphate: step 4/9. This Chloroherpeton thalassium (strain ATCC 35110 / GB-78) protein is 1-(5-phosphoribosyl)-5-[(5-phosphoribosylamino)methylideneamino] imidazole-4-carboxamide isomerase.